We begin with the raw amino-acid sequence, 608 residues long: Pentatricopeptide repeat-containing protein 1, apicoplast (608 aa).

PPR repeat units lie at residues 165-199 (TTLA…NIKP), 200-230 (DLVS…MIES), 236-270 (NYEI…PFVE), 336-370 (QYSE…GKYM), 372-402 (SIFV…LKND), 410-445 (NVNI…LLTP), and 446-480 (NNLS…KLLN).

This sequence belongs to the PPR family. P subfamily. In terms of assembly, homodimer.

The protein resides in the plastid. It is found in the apicoplast. Functionally, binds to apicoplast RNA transcripts, preferentially to the motif UUAU, and protects RNA transcripts from degradation by ribonuclease. The chain is Pentatricopeptide repeat-containing protein 1, apicoplast from Plasmodium falciparum (isolate 3D7).